We begin with the raw amino-acid sequence, 152 residues long: Probable flagellum biosynthesis repressor protein FlbT (152 aa).

This sequence belongs to the FlbT family.

In terms of biological role, has a post-transcriptional repressor function in flagellum biogenesis. Associates with the 5'-UTR of fljK mRNA and promotes its degradation. This is Probable flagellum biosynthesis repressor protein FlbT from Brucella canis (strain ATCC 23365 / NCTC 10854 / RM-666).